The following is a 193-amino-acid chain: MPVHGVIYYSSPSMATFLSPAQDNLVRTYFAQHLKKWVVQYKLYRNAVTPKTLEFLKQNINPSMLACVDEATMIDAEPELEDIIVRTKLWNFRQSFTIEGSIYEVGSFKVAIANVLQKSVWKGILFHVTYDGTESVDLARPIIQEFFLKCFLQNNKSVTPVYESFFNQPRHSLDSKLLLQLFKQRIDTVSQRT.

The protein belongs to the Mediator complex subunit 20 family. As to quaternary structure, component of the Mediator complex.

The protein localises to the nucleus. Its function is as follows. Component of the Mediator complex, a coactivator involved in the regulated transcription of nearly all RNA polymerase II-dependent genes. Mediator functions as a bridge to convey information from gene-specific regulatory proteins to the basal RNA polymerase II transcription machinery. The Mediator complex, having a compact conformation in its free form, is recruited to promoters by direct interactions with regulatory proteins and serves for the assembly of a functional preinitiation complex with RNA polymerase II and the general transcription factors. The polypeptide is Mediator of RNA polymerase II transcription subunit 20 (med20) (Schizosaccharomyces pombe (strain 972 / ATCC 24843) (Fission yeast)).